The sequence spans 345 residues: D-alanine--D-alanine ligase (345 aa).

Positions 133–332 constitute an ATP-grasp domain; it reads KWLCHARGVK…LPHTKRAKVT (200 aa). Residue 160–211 coordinates ATP; sequence AYPIIVKPSRLGSSIGVSIVKDESKLDYALDSAFEFDNTVIVEPFLEGVKEY. Positions 284, 296, and 298 each coordinate Mg(2+).

Belongs to the D-alanine--D-alanine ligase family. Requires Mg(2+) as cofactor. Mn(2+) is required as a cofactor.

It is found in the cytoplasm. The enzyme catalyses 2 D-alanine + ATP = D-alanyl-D-alanine + ADP + phosphate + H(+). Its pathway is cell wall biogenesis; peptidoglycan biosynthesis. In terms of biological role, cell wall formation. This Sulfurimonas denitrificans (strain ATCC 33889 / DSM 1251) (Thiomicrospira denitrificans (strain ATCC 33889 / DSM 1251)) protein is D-alanine--D-alanine ligase.